The sequence spans 281 residues: UPF0294 protein VC_2238 (281 aa).

The protein belongs to the UPF0294 family.

It localises to the cytoplasm. This is UPF0294 protein VC_2238 from Vibrio cholerae serotype O1 (strain ATCC 39315 / El Tor Inaba N16961).